The following is a 297-amino-acid chain: MGTAKTFTLLAAMTAIFMAIGFLVGGMAGMILAFVVAAGMNVFAWWNSDKMVLRMQGAQEVLPDTKNPMLRAFGEDVARLAENAGLPAPRIYIIDTPQPNAFATGRNPQNAAVAATTGLLNMLNREEVAGVMAHELAHVQNRDTLTMTVTATLAGAIGMLANFALFFGRDRAGLIGSIAIMIFAPMAAALVQMAISRSREYVADKRGAEICGNPLWLASALEKIERGARSQINPYAERSPAMAHMYISNPLNGRGQDKLFSTHPSTANRVEALRRMAGEMGISGVAAPTARSSGPWG.

A helical transmembrane segment spans residues 16-36; it reads IFMAIGFLVGGMAGMILAFVV. His134 lines the Zn(2+) pocket. Glu135 is a catalytic residue. His138 contributes to the Zn(2+) binding site. 2 consecutive transmembrane segments (helical) span residues 147–167 and 175–195; these read MTVT…ALFF and IGSI…QMAI. Zn(2+) is bound at residue Glu200.

It belongs to the peptidase M48B family. Zn(2+) serves as cofactor.

It localises to the cell inner membrane. The protein is Protease HtpX homolog of Hyphomonas neptunium (strain ATCC 15444).